A 258-amino-acid chain; its full sequence is Imidazole glycerol phosphate synthase subunit HisF (258 aa).

Catalysis depends on residues D11 and D130.

The protein belongs to the HisA/HisF family. Heterodimer of HisH and HisF.

The protein localises to the cytoplasm. It carries out the reaction 5-[(5-phospho-1-deoxy-D-ribulos-1-ylimino)methylamino]-1-(5-phospho-beta-D-ribosyl)imidazole-4-carboxamide + L-glutamine = D-erythro-1-(imidazol-4-yl)glycerol 3-phosphate + 5-amino-1-(5-phospho-beta-D-ribosyl)imidazole-4-carboxamide + L-glutamate + H(+). It functions in the pathway amino-acid biosynthesis; L-histidine biosynthesis; L-histidine from 5-phospho-alpha-D-ribose 1-diphosphate: step 5/9. In terms of biological role, IGPS catalyzes the conversion of PRFAR and glutamine to IGP, AICAR and glutamate. The HisF subunit catalyzes the cyclization activity that produces IGP and AICAR from PRFAR using the ammonia provided by the HisH subunit. The polypeptide is Imidazole glycerol phosphate synthase subunit HisF (Shigella dysenteriae serotype 1 (strain Sd197)).